A 141-amino-acid chain; its full sequence is Nucleoside diphosphate kinase 1 (141 aa).

Residues K11, F59, R87, T93, R104, and N114 each contribute to the ATP site. Catalysis depends on H117, which acts as the Pros-phosphohistidine intermediate.

Belongs to the NDK family. Homotetramer. Mg(2+) serves as cofactor.

Its subcellular location is the cytoplasm. The catalysed reaction is a 2'-deoxyribonucleoside 5'-diphosphate + ATP = a 2'-deoxyribonucleoside 5'-triphosphate + ADP. The enzyme catalyses a ribonucleoside 5'-diphosphate + ATP = a ribonucleoside 5'-triphosphate + ADP. Functionally, major role in the synthesis of nucleoside triphosphates other than ATP. The ATP gamma phosphate is transferred to the NDP beta phosphate via a ping-pong mechanism, using a phosphorylated active-site intermediate. The chain is Nucleoside diphosphate kinase 1 from Protochlamydia amoebophila (strain UWE25).